Here is a 441-residue protein sequence, read N- to C-terminus: Serine--tRNA ligase (441 aa).

250-252 (TSE) is a binding site for L-serine. ATP contacts are provided by residues 281–283 (RRE) and V297. L-serine is bound at residue E304. 368–371 (EIVS) contributes to the ATP binding site. Residue T402 coordinates L-serine.

This sequence belongs to the class-II aminoacyl-tRNA synthetase family. Type-1 seryl-tRNA synthetase subfamily. In terms of assembly, homodimer. The tRNA molecule binds across the dimer.

Its subcellular location is the cytoplasm. It carries out the reaction tRNA(Ser) + L-serine + ATP = L-seryl-tRNA(Ser) + AMP + diphosphate + H(+). The catalysed reaction is tRNA(Sec) + L-serine + ATP = L-seryl-tRNA(Sec) + AMP + diphosphate + H(+). The protein operates within aminoacyl-tRNA biosynthesis; selenocysteinyl-tRNA(Sec) biosynthesis; L-seryl-tRNA(Sec) from L-serine and tRNA(Sec): step 1/1. In terms of biological role, catalyzes the attachment of serine to tRNA(Ser). Is also able to aminoacylate tRNA(Sec) with serine, to form the misacylated tRNA L-seryl-tRNA(Sec), which will be further converted into selenocysteinyl-tRNA(Sec). This Thermoplasma acidophilum (strain ATCC 25905 / DSM 1728 / JCM 9062 / NBRC 15155 / AMRC-C165) protein is Serine--tRNA ligase.